The sequence spans 319 residues: Glucokinase (319 aa).

Position 8-13 (8-13 (GDIGGT)) interacts with ATP.

Belongs to the bacterial glucokinase family.

It localises to the cytoplasm. It catalyses the reaction D-glucose + ATP = D-glucose 6-phosphate + ADP + H(+). This is Glucokinase from Chromohalobacter salexigens (strain ATCC BAA-138 / DSM 3043 / CIP 106854 / NCIMB 13768 / 1H11).